The sequence spans 29 residues: Galanin (29 aa).

Threonine 29 is subject to Threonine amide.

This sequence belongs to the galanin family.

The protein localises to the secreted. Its function is as follows. Contracts smooth muscle of the gastrointestinal and genitourinary tract, regulates growth hormone release, modulates insulin release, and may be involved in the control of adrenal secretion. This is Galanin (GAL) from Gallus gallus (Chicken).